A 540-amino-acid polypeptide reads, in one-letter code: CTP synthase (540 aa).

Residues 1–264 form an amidoligase domain region; that stretch reads MQYIVVTGGV…ISYLSKLSGK (264 aa). Position 12 (serine 12) interacts with CTP. Serine 12 is a UTP binding site. ATP is bound at residue 13 to 18; the sequence is GLGKGT. Residue tyrosine 53 participates in L-glutamine binding. Aspartate 70 is an ATP binding site. The Mg(2+) site is built by aspartate 70 and glutamate 140. CTP-binding positions include 147–149, 185–190, and arginine 221; these read DIE and KTKPTQ. Residues 185–190 and arginine 221 each bind UTP; that span reads KTKPTQ. One can recognise a Glutamine amidotransferase type-1 domain in the interval 294-527; the sequence is YVDLHDAYIS…VQQALIYKKN (234 aa). Glycine 347 serves as a coordination point for L-glutamine. Cysteine 374 acts as the Nucleophile; for glutamine hydrolysis in catalysis. Residues 375 to 378, glutamate 398, and arginine 455 contribute to the L-glutamine site; that span reads LGFQ. Active-site residues include histidine 500 and glutamate 502.

The protein belongs to the CTP synthase family. As to quaternary structure, homotetramer.

It carries out the reaction UTP + L-glutamine + ATP + H2O = CTP + L-glutamate + ADP + phosphate + 2 H(+). The enzyme catalyses L-glutamine + H2O = L-glutamate + NH4(+). It catalyses the reaction UTP + NH4(+) + ATP = CTP + ADP + phosphate + 2 H(+). It functions in the pathway pyrimidine metabolism; CTP biosynthesis via de novo pathway; CTP from UDP: step 2/2. Its activity is regulated as follows. Allosterically activated by GTP, when glutamine is the substrate; GTP has no effect on the reaction when ammonia is the substrate. The allosteric effector GTP functions by stabilizing the protein conformation that binds the tetrahedral intermediate(s) formed during glutamine hydrolysis. Inhibited by the product CTP, via allosteric rather than competitive inhibition. Functionally, catalyzes the ATP-dependent amination of UTP to CTP with either L-glutamine or ammonia as the source of nitrogen. Regulates intracellular CTP levels through interactions with the four ribonucleotide triphosphates. The protein is CTP synthase of Thermoplasma volcanium (strain ATCC 51530 / DSM 4299 / JCM 9571 / NBRC 15438 / GSS1).